The chain runs to 321 residues: Ferredoxin--NADP reductase (321 aa).

Residues Asp28, Gln36, Tyr41, Ala81, Phe115, Asp274, and Ser315 each contribute to the FAD site.

It belongs to the ferredoxin--NADP reductase type 2 family. Homodimer. The cofactor is FAD.

The catalysed reaction is 2 reduced [2Fe-2S]-[ferredoxin] + NADP(+) + H(+) = 2 oxidized [2Fe-2S]-[ferredoxin] + NADPH. The chain is Ferredoxin--NADP reductase from Frankia alni (strain DSM 45986 / CECT 9034 / ACN14a).